Consider the following 115-residue polypeptide: DNA-directed RNA polymerase subunit Rpo4 (115 aa).

The protein belongs to the eukaryotic RPB4 RNA polymerase subunit family. Part of the RNA polymerase complex. Forms a stalk with Rpo7 that extends from the main structure.

The protein resides in the cytoplasm. It catalyses the reaction RNA(n) + a ribonucleoside 5'-triphosphate = RNA(n+1) + diphosphate. In terms of biological role, DNA-dependent RNA polymerase (RNAP) catalyzes the transcription of DNA into RNA using the four ribonucleoside triphosphates as substrates. This subunit is less well bound than the others. This is DNA-directed RNA polymerase subunit Rpo4 from Methanocaldococcus jannaschii (strain ATCC 43067 / DSM 2661 / JAL-1 / JCM 10045 / NBRC 100440) (Methanococcus jannaschii).